Here is a 490-residue protein sequence, read N- to C-terminus: Actin-related protein 6 (490 aa).

Belongs to the actin family. ARP6 subfamily.

It is found in the cytoplasm. The protein resides in the cytoskeleton. The protein is Actin-related protein 6 of Dictyostelium discoideum (Social amoeba).